A 1269-amino-acid chain; its full sequence is MPAERKKSASMEEKESLLNNKEKDCSERRPVSSKEKPRDDLKVTAKKEVSKVPEDKKKRLEEDKRKKEDKERKKKEEEKVKAEEELKKKEEEEKKKQEEEERKKQEEQAKRQQEEAAAQLKEKEESLQLHQEAWERHQLRKELRSKNQNAPDNRPEENFFSRLDSSLKKNTAFVKKLKTITEQQRDSLSHDFNGLNLSKYIAEAVASIVEAKLKLSDVNCAAHLCSLFHQRYSDFAPSLLQVWKKHFEARKEEKTPNITKLRTDLRFIAELTIVGIFTDKEGLSLIYEQLKSIINADRESHTHVSVVISFCRHCGDDIAGLVPRKVKSAAEKFNLSFPPSEIISPEKQQPFQNLLKEYFTSLTKHLKRDHRELQNTERQNRRILHSKGELSEDRHKQYEEFAMSYQKLLANSQSLADLLDENMPDLPQDKPTPEEHGPGIDIFTPGKPGEYDLEGGIWEDEDARNFYENLIDLKAFVPAILFKDNEKSQNKDSNKDDSKEAKEPKDNKEASSPDDLELELENLEINDDTLELEGADEAEDLTKKLLDEQEQEDEEASTGSHLKLIVDAFLQQLPNCVNRDLIDKAAMDFCMNMNTKANRKKLVRALFIVPRQRLDLLPFYARLVATLHPCMSDVAEDLCSMLRGDFRFHVRKKDQINIETKNKTVRFIGELTKFKMFTKNDTLHCLKMLLSDFSHHHIEMACTLLETCGRFLFRSPESHLRTSVLLEQMMRKKQAMHLDARYVTMVENAYYYCNPPPAEKTVRKKRPPLQEYVRKLLYKDLSKVTTEKVLRQMRKLPWQDQEVKDYVICCMINIWNVKYNSIHCVANLLAGLVLYQEDVGIHVVDGVLEDIRLGMEVNQPKFNQRRISSAKFLGELYNYRMVESAVIFRTLYSFTSFGVNPDGSPSSLDPPEHLFRIRLVCTILDTCGQYFDRGSSKRKLDCFLVYFQRYVWWKKSLEVWTKDHPFPIDIDYMISDTLELLRPKIKLCNSLEESIRQVQDLEREFLIKLGLVNDKESKDSMTEGENLEEDEEEEEGGAETEEQSGNESEVNEPEEEEGSEEEEEGEEEEEENTDYLTDSNKENETDEENAEVMIKGGGLKHVPCVEDEDFIQALDKMMLENLQQRSGESVKVHQLDVAIPLHLKSQLRKGPPLGGGEGETESADTMPFVMLTRKGNKQQFKILNVPMSSQLAANHWNQQQAEQEERMRMKKLTLDINERQEQEDYQEMLQSLAQRPAPANTNRERRPRYQHPKGAPNADLIFKTGGRRR.

Disordered regions lie at residues 1–125 (MPAE…EKEE) and 143–162 (LRSK…FFSR). Residues 57–133 (KKRLEEDKRK…EESLQLHQEA (77 aa)) adopt a coiled-coil conformation. The interval 94–132 (KKKQEEEERKKQEEQAKRQQEEAAAQLKEKEESLQLHQE) is sufficient for interaction with UPF1. The MIF4G 1 domain occupies 168 to 396 (KKNTAFVKKL…KGELSEDRHK (229 aa)). Disordered regions lie at residues 422–444 (NMPD…DIFT) and 487–518 (KSQN…DLEL). Basic and acidic residues-rich tracts occupy residues 427-438 (PQDKPTPEEHGP) and 487-511 (KSQN…KEAS). MIF4G domains follow at residues 571-755 (QQLP…YCNP) and 774-984 (RKLL…LRPK). The interval 709-926 (GRFLFRSPES…IRLVCTILDT (218 aa)) is sufficient for interaction with UPF3A and UPF3B. Positions 755–1269 (PPPAEKTVRK…LIFKTGGRRR (515 aa)) are sufficient for interaction with EIF4A1 and EIF1. Positions 837–857 (EDVGIHVVDGVLEDIRLGMEV) are binds to UPF3B. A disordered region spans residues 1017–1090 (SKDSMTEGEN…KENETDEENA (74 aa)). Residues 1025 to 1073 (ENLEEDEEEEEGGAETEEQSGNESEVNEPEEEEGSEEEEEGEEEEEENT) show a composition bias toward acidic residues. The sufficient for interaction with UPF1 C-terminus stretch occupies residues 1081 to 1269 (KENETDEENA…LIFKTGGRRR (189 aa)). Phosphothreonine is present on T1085. 2 interaction with UPF1 regions span residues 1102–1126 (VPCV…QQRS) and 1164–1204 (DTMP…AEQE). The necessary for interaction with UPF1 stretch occupies residues 1102–1195 (VPCVEDEDFI…PMSSQLAANH (94 aa)). The disordered stretch occupies residues 1218 to 1269 (ERQEQEDYQEMLQSLAQRPAPANTNRERRPRYQHPKGAPNADLIFKTGGRRR).

As to quaternary structure, found in a post-splicing messenger ribonucleoprotein (mRNP) complex. Associates with the exon junction complex (EJC). Interacts with SMG1, EST1A, UPF3A, UPF3B, EIF4A1 and EIF1. Interacts with UPF1; interaction is promoted by TDRD6. Interacts with DDX4. Localized in male germ cells.

Its subcellular location is the cytoplasm. The protein resides in the perinuclear region. Its function is as follows. Involved in nonsense-mediated decay (NMD) of mRNAs containing premature stop codons by associating with the nuclear exon junction complex (EJC). Recruited by UPF3B associated with the EJC core at the cytoplasmic side of the nuclear envelope and the subsequent formation of an UPF1-UPF2-UPF3 surveillance complex (including UPF1 bound to release factors at the stalled ribosome) is believed to activate NMD. In cooperation with UPF3B stimulates both ATPase and RNA helicase activities of UPF1. Binds spliced mRNA. The polypeptide is Regulator of nonsense transcripts 2 (Mus musculus (Mouse)).